A 341-amino-acid chain; its full sequence is MSKPTVGINGFGRIGRLVLRAAVEKDSVNVVAVNDPFISIDYMVYLFQYDSTHGRFKGTVKHEGDYLIVANEGKSQHKIKVYNSKDPAEIQWGAAGADYVVESTGVFTTIEKANAHLKGGAKKVIISAPSADAPMFVVGVNHEKYDHANDHIISNASCTTNCLAPLAKVINDNFGIIEGLMTTVHAVTATQKTVDGPSGKLWRDGRGAGQNIIPASTGAAKAVGKVIPELNGKLTGMAFRVPTPDVSVVDLTARLEKPASLDDIKRVIKAAAEGPLKGVLAYTEDQVVSTDFVSDTHSSIFDAGASIILNPNFVKLISWYDNEFGYSNRVVDLISYIATKA.

NAD(+) contacts are provided by residues 13-14 (RI), aspartate 35, and lysine 85. Residues 157–159 (SCT), threonine 188, 217–218 (TG), and arginine 240 contribute to the D-glyceraldehyde 3-phosphate site. Cysteine 158 functions as the Nucleophile in the catalytic mechanism. Asparagine 322 contacts NAD(+).

Belongs to the glyceraldehyde-3-phosphate dehydrogenase family. In terms of assembly, homotetramer.

The protein resides in the cytoplasm. It carries out the reaction D-glyceraldehyde 3-phosphate + phosphate + NAD(+) = (2R)-3-phospho-glyceroyl phosphate + NADH + H(+). Its pathway is carbohydrate degradation; glycolysis; pyruvate from D-glyceraldehyde 3-phosphate: step 1/5. The protein is Glyceraldehyde-3-phosphate dehydrogenase 2 of Caenorhabditis briggsae.